The chain runs to 426 residues: Glutamate-1-semialdehyde 2,1-aminomutase (426 aa).

Position 264 is an N6-(pyridoxal phosphate)lysine (K264).

This sequence belongs to the class-III pyridoxal-phosphate-dependent aminotransferase family. HemL subfamily. Requires pyridoxal 5'-phosphate as cofactor.

The protein resides in the cytoplasm. The catalysed reaction is (S)-4-amino-5-oxopentanoate = 5-aminolevulinate. Its pathway is porphyrin-containing compound metabolism; protoporphyrin-IX biosynthesis; 5-aminolevulinate from L-glutamyl-tRNA(Glu): step 2/2. This chain is Glutamate-1-semialdehyde 2,1-aminomutase, found in Methanocella arvoryzae (strain DSM 22066 / NBRC 105507 / MRE50).